The sequence spans 156 residues: Small ribosomal subunit protein uS7 (156 aa).

This sequence belongs to the universal ribosomal protein uS7 family. Part of the 30S ribosomal subunit. Contacts proteins S9 and S11.

One of the primary rRNA binding proteins, it binds directly to 16S rRNA where it nucleates assembly of the head domain of the 30S subunit. Is located at the subunit interface close to the decoding center, probably blocks exit of the E-site tRNA. This chain is Small ribosomal subunit protein uS7, found in Rhizobium etli (strain ATCC 51251 / DSM 11541 / JCM 21823 / NBRC 15573 / CFN 42).